A 391-amino-acid polypeptide reads, in one-letter code: 4-coumarate--CoA ligase (391 aa).

It belongs to the ATP-dependent AMP-binding enzyme family.

The catalysed reaction is (E)-4-coumarate + ATP + CoA = (E)-4-coumaroyl-CoA + AMP + diphosphate. In terms of biological role, converts p-coumaric acid into p-coumaryl CoA. This is necessary for the activation of the photoactive yellow protein (PYP) chromophore. In Halorhodospira halophila (Ectothiorhodospira halophila), this protein is 4-coumarate--CoA ligase (pcl).